We begin with the raw amino-acid sequence, 78 residues long: Neurogranin (78 aa).

Residue Met-1 is modified to N-acetylmethionine. A disulfide bridge connects residues Cys-3 and Cys-51. Residues 26 to 47 (ANAAAAKIQASFRGHMARKKIK) enclose the IQ domain. Ser-36 is subject to Phosphoserine; by PHK and PKC. Positions 39 to 78 (GHMARKKIKSGECGRKGPGPGGPGGAGGARGGAGGGPSGD) are disordered. In terms of domain architecture, Collagen-like spans 48–78 (SGECGRKGPGPGGPGGAGGARGGAGGGPSGD). The span at 54 to 78 (KGPGPGGPGGAGGARGGAGGGPSGD) shows a compositional bias: gly residues. Citrulline; partial is present on Arg-68. The residue at position 68 (Arg-68) is an Omega-N-methylarginine.

The protein belongs to the neurogranin family. Interacts with apo-calmodulin; this interaction decreases the affinity of calmodulin for calcium ions. Disulfide bond formation is redox-sensitive. The cysteine residues are readily oxidized by several nitric acid (NO) donors and other oxidants to form intramolecular disulfide. Cys-51 can form a disulfide with any other of the cysteine residues with an order of reactivity Cys-9 &gt; Cys-4 &gt; Cys-3. In terms of processing, phosphorylated at Ser-36 by PHK and PKC, phosphorylation prevents interaction with Calmodulin and interrupts several learning- and memory-associated functions.

Its subcellular location is the cytoplasm. It localises to the synapse. The protein localises to the cell projection. It is found in the dendritic spine. Regulates the affinity of calmodulin for calcium. Involved in synaptic plasticity and spatial learning. The polypeptide is Neurogranin (Nrgn) (Mus musculus (Mouse)).